Reading from the N-terminus, the 460-residue chain is Chromosomal replication initiator protein DnaA (460 aa).

Positions 1 to 73 (MEISIDSLWS…ANVVQSILGH (73 aa)) are domain I, interacts with DnaA modulators. Positions 73–116 (HPVEIYITVAKGEEFEEIGGGGAWELPTTNSIYETPNQNRQPNT) are domain II. The domain III, AAA+ region stretch occupies residues 117 to 333 (ELNAKYVFSR…GALTRALAYI (217 aa)). Residues glycine 161, glycine 163, lysine 164, and threonine 165 each coordinate ATP. The domain IV, binds dsDNA stretch occupies residues 334–460 (SIWGLPMTVA…MNSRSRKPSL (127 aa)).

It belongs to the DnaA family. In terms of assembly, oligomerizes as a right-handed, spiral filament on DNA at oriC.

Its subcellular location is the cytoplasm. In terms of biological role, plays an essential role in the initiation and regulation of chromosomal replication. ATP-DnaA binds to the origin of replication (oriC) to initiate formation of the DNA replication initiation complex once per cell cycle. Binds the DnaA box (a 9 base pair repeat at the origin) and separates the double-stranded (ds)DNA. Forms a right-handed helical filament on oriC DNA; dsDNA binds to the exterior of the filament while single-stranded (ss)DNA is stabiized in the filament's interior. The ATP-DnaA-oriC complex binds and stabilizes one strand of the AT-rich DNA unwinding element (DUE), permitting loading of DNA polymerase. After initiation quickly degrades to an ADP-DnaA complex that is not apt for DNA replication. Binds acidic phospholipids. The protein is Chromosomal replication initiator protein DnaA of Trichormus variabilis (strain ATCC 29413 / PCC 7937) (Anabaena variabilis).